The primary structure comprises 294 residues: MATYGQNCARPMCIPPSYADLGKAARDIFNKGFGFGLVKLDVKTKSCSGVEFSTSGSSNTDTGKVTGTLETKYKWCEYGLTFTEKWNTDNTLGTEIAIEDQICQGLKLTFDTTFSPNTGKKSGKIKSSYKRECINLGCDVDFDFAGPAIHGSAVFGYEGWLAGYQMTFDSAKSKLTRNNFAVGYRTGDFQLHTNVNDGTEFGGSIYQKVCEDLDTSVNLAWTSGTNCTRFGIAAKYQLDPTASISAKVNNSSLIGVGYTQTLRPGVKLTLSALVDGKSINAGGHKLGLALELEA.

At alanine 2 the chain carries N-acetylalanine. Lysine 23 and lysine 31 together coordinate ATP. Lysine 31 carries the N6-acetyllysine; alternate modification. Lysine 31 is subject to N6-succinyllysine; alternate. Lysine 31 participates in a covalent cross-link: Glycyl lysine isopeptide (Lys-Gly) (interchain with G-Cter in ubiquitin); alternate. 2 consecutive transmembrane segments (beta stranded) span residues 37–46 and 50–58; these read LVKLDVKTKS and VEFSTSGSS. Lysine 64 is covalently cross-linked (Glycyl lysine isopeptide (Lys-Gly) (interchain with G-Cter in ubiquitin)). Residues 65 to 75 traverse the membrane as a beta stranded segment; sequence VTGTLETKYKW. At tyrosine 78 the chain carries Phosphotyrosine. 3 beta stranded membrane passes run 80-87, 91-100, and 106-115; these read LTFTEKWN, TLGTEIAIED, and LKLTFDTTFS. Threonine 118 carries the phosphothreonine modification. The residue at position 120 (lysine 120) is an N6-acetyllysine; alternate. A Glycyl lysine isopeptide (Lys-Gly) (interchain with G-Cter in ubiquitin); alternate cross-link involves residue lysine 120. Residue lysine 121 forms a Glycyl lysine isopeptide (Lys-Gly) (interchain with G-Cter in ubiquitin) linkage. 4 beta stranded membrane passes run 122-131, 134-141, 148-156, and 161-169; these read SGKIKSSYKR, INLGCDVD, AIHGSAVFG, and LAGYQMTFD. Lysine 172 participates in a covalent cross-link: Glycyl lysine isopeptide (Lys-Gly) (interchain with G-Cter in ubiquitin). Beta stranded transmembrane passes span 174-186, 189-196, 200-209, 213-222, 229-238, and 242-249; these read KLTRNNFAVGYRT, FQLHTNVN, EFGGSIYQKV, LDTSVNLAWT, RFGIAAKYQL, and ASISAKVN. Position 251 is a phosphoserine (serine 251). NAD(+) is bound by residues 253-255 and 271-275; these read LIG and SALVD. 2 consecutive transmembrane segments (beta stranded) span residues 253–262 and 265–274; these read LIGVGYTQTL and GVKLTLSALV. Lysine 277 carries the N6-acetyllysine; alternate modification. Residue lysine 277 forms a Glycyl lysine isopeptide (Lys-Gly) (interchain with G-Cter in ubiquitin); alternate linkage. The chain crosses the membrane as a beta stranded span at residues 284-293; sequence HKLGLALELE.

The protein belongs to the eukaryotic mitochondrial porin family. As to quaternary structure, monomer, homodimer and higher order oligomers; formation of higher order structures is necessary for scramblase activity. Interacts with ARMC12 in a TBC1D21-dependent manner. Interacts with KLC3. Interacts with SPATA33. Interacts with PPP3CC in a SPATA33-dependent manner. Ubiquitinated by PRKN during mitophagy, leading to its degradation and enhancement of mitophagy. Deubiquitinated by USP30.

Its subcellular location is the mitochondrion outer membrane. It is found in the membrane. The enzyme catalyses chloride(in) = chloride(out). It catalyses the reaction K(+)(in) = K(+)(out). It carries out the reaction a 1,2-diacyl-sn-glycero-3-phospho-L-serine(in) = a 1,2-diacyl-sn-glycero-3-phospho-L-serine(out). The catalysed reaction is a 1,2-diacyl-sn-glycero-3-phosphocholine(in) = a 1,2-diacyl-sn-glycero-3-phosphocholine(out). The enzyme catalyses a 1,2-diacyl-sn-glycero-3-phospho-(1D-myo-inositol)(in) = a 1,2-diacyl-sn-glycero-3-phospho-(1D-myo-inositol)(out). Non-selective voltage-gated ion channel that mediates the transport of anions and cations through the mitochondrion outer membrane and plasma membrane. The channel adopts an open conformation at zero mV and a closed conformation at both positive and negative potentials. There are two populations of channels; the main that functions in a lower open-state conductance with lower ion selectivity, that switch, in a voltage-dependent manner, from the open to a low-conducting 'closed' state and the other that has a normal ion selectivity in the typical high conductance, 'open' state. Binds various lipids, including the sphingolipid ceramide, the phospholipid phosphatidylcholine, and the sterols cholesterol and oxysterol. Binding of ceramide promotes the mitochondrial outer membrane permeabilization (MOMP) apoptotic pathway. Functionally, catalyzes the scrambling of phospholipids across the outer mitochondrial membrane; the mechanism is unrelated to channel activity and is capable of translocating both anionic and zwitterionic phospholipids. This chain is Non-selective voltage-gated ion channel VDAC2, found in Bos taurus (Bovine).